Consider the following 115-residue polypeptide: Cycloviolacin-O13 (115 aa).

The signal sequence occupies residues 1–22; the sequence is MDAKKMFVALVLIATFALPSLA. Residues 23–81 constitute a propeptide that is removed on maturation; it reads TFEKDFITPETIQAILKKSAPLSNIMLEEDVINALLKSKTVISNPIIEEAFLKNSNGLN. The segment at residues 82–111 is a cross-link (cyclopeptide (Gly-Asn)); the sequence is GIPCGESCVWIPCISAAIGCSCKSKVCYRN. 3 disulfide bridges follow: cysteine 85-cysteine 101, cysteine 89-cysteine 103, and cysteine 94-cysteine 108. The propeptide occupies 112-115; the sequence is SLDN.

Cycloviolacin-O13 is a cyclic peptide. Expressed in leaves, petals, petioles, roots and runners (at protein level).

Functionally, probably participates in a plant defense mechanism. Has hemolytic activity. The chain is Cycloviolacin-O13 from Viola odorata (Sweet violet).